Reading from the N-terminus, the 939-residue chain is Valine--tRNA ligase (939 aa).

The short motif at 47-57 (PNVTGILHMGH) is the 'HIGH' region element. A 'KMSKS' region motif is present at residues 563 to 567 (KLSKS). Lys566 lines the ATP pocket. The stretch at 874–939 (EHLAKERVRL…QSILDKLASL (66 aa)) forms a coiled coil.

This sequence belongs to the class-I aminoacyl-tRNA synthetase family. ValS type 1 subfamily. As to quaternary structure, monomer.

Its subcellular location is the cytoplasm. It catalyses the reaction tRNA(Val) + L-valine + ATP = L-valyl-tRNA(Val) + AMP + diphosphate. In terms of biological role, catalyzes the attachment of valine to tRNA(Val). As ValRS can inadvertently accommodate and process structurally similar amino acids such as threonine, to avoid such errors, it has a 'posttransfer' editing activity that hydrolyzes mischarged Thr-tRNA(Val) in a tRNA-dependent manner. This Chlamydia trachomatis serovar L2b (strain UCH-1/proctitis) protein is Valine--tRNA ligase.